Consider the following 185-residue polypeptide: Probable chorismate pyruvate-lyase (185 aa).

The substrate site is built by arginine 80, leucine 118, and glutamate 170.

This sequence belongs to the UbiC family.

The protein localises to the cytoplasm. It carries out the reaction chorismate = 4-hydroxybenzoate + pyruvate. The protein operates within cofactor biosynthesis; ubiquinone biosynthesis. In terms of biological role, removes the pyruvyl group from chorismate, with concomitant aromatization of the ring, to provide 4-hydroxybenzoate (4HB) for the ubiquinone pathway. In Pseudomonas putida (strain ATCC 47054 / DSM 6125 / CFBP 8728 / NCIMB 11950 / KT2440), this protein is Probable chorismate pyruvate-lyase.